Consider the following 355-residue polypeptide: Fructose-1,6-bisphosphatase class 1 (355 aa).

Mg(2+) contacts are provided by glutamate 94, aspartate 116, leucine 118, and aspartate 119. Residues 119–122 (DGSS), asparagine 211, and 263–265 (YLY) contribute to the substrate site. Glutamate 283 is a binding site for Mg(2+).

The protein belongs to the FBPase class 1 family. As to quaternary structure, homotetramer. Requires Mg(2+) as cofactor.

It is found in the cytoplasm. It catalyses the reaction beta-D-fructose 1,6-bisphosphate + H2O = beta-D-fructose 6-phosphate + phosphate. It functions in the pathway carbohydrate biosynthesis; Calvin cycle. The sequence is that of Fructose-1,6-bisphosphatase class 1 from Rhodospirillum rubrum (strain ATCC 11170 / ATH 1.1.1 / DSM 467 / LMG 4362 / NCIMB 8255 / S1).